Here is a 294-residue protein sequence, read N- to C-terminus: Acetyl-coenzyme A carboxylase carboxyl transferase subunit beta (294 aa).

Residues 25–294 (VWTKCTSCEQ…PLVVPVDGSH (270 aa)) form the CoA carboxyltransferase N-terminal domain. Zn(2+)-binding residues include C29, C32, C48, and C51. The segment at 29–51 (CTSCEQVLYSAELERNLEVCPKC) adopts a C4-type zinc-finger fold.

The protein belongs to the AccD/PCCB family. In terms of assembly, acetyl-CoA carboxylase is a heterohexamer composed of biotin carboxyl carrier protein (AccB), biotin carboxylase (AccC) and two subunits each of ACCase subunit alpha (AccA) and ACCase subunit beta (AccD). The cofactor is Zn(2+).

It is found in the cytoplasm. The enzyme catalyses N(6)-carboxybiotinyl-L-lysyl-[protein] + acetyl-CoA = N(6)-biotinyl-L-lysyl-[protein] + malonyl-CoA. It participates in lipid metabolism; malonyl-CoA biosynthesis; malonyl-CoA from acetyl-CoA: step 1/1. Its function is as follows. Component of the acetyl coenzyme A carboxylase (ACC) complex. Biotin carboxylase (BC) catalyzes the carboxylation of biotin on its carrier protein (BCCP) and then the CO(2) group is transferred by the transcarboxylase to acetyl-CoA to form malonyl-CoA. This Aliivibrio fischeri (strain ATCC 700601 / ES114) (Vibrio fischeri) protein is Acetyl-coenzyme A carboxylase carboxyl transferase subunit beta.